The chain runs to 327 residues: MCSTSGCDLEEIPLDDDDLNTIEFKILAYYTRHHVFKSTPALFSPKLLRTRSLSQRGLGNCSANESWTEVSWPCRNSQSSEKAINLGKKKSSWKAFFGVVEKEDSQSTPAKVSAQGQRTLEYQDSHSQQWSRCLSNVEQCLEHEAVDPKVISIANRVAEIVYSWPPPQATQAGGFKSKEIFVTEGLSFQLQGHVPVASSSKKDEEEQILAKIVELLKYSGDQLERKLKKDKALMGHFQDGLSYSVFKTITDQVLMGVDPRGESEVKAQGFKAALVIDVTAKLTAIDNHPMNRVLGFGTKYLKENFSPWIQQHGGWEKILGISHEEVD.

The residue at position 44 (serine 44) is a Phosphoserine. The BH3 motif lies at 212–226; the sequence is IVELLKYSGDQLERK. Positions 308–315 match the BH2 motif; the sequence is WIQQHGGW.

Belongs to the Bcl-2 family. Post-translationally, phosphorylated by MELK, leading to inhibit its pro-apoptotic function. In terms of tissue distribution, isoform 1 is widely expressed. Isoform 2 is testis-specific.

The protein localises to the cytoplasm. Its subcellular location is the cytosol. It localises to the endomembrane system. Its function is as follows. Plays a role in apoptosis. The sequence is that of Apoptosis facilitator Bcl-2-like protein 14 (BCL2L14) from Homo sapiens (Human).